A 325-amino-acid polypeptide reads, in one-letter code: tRNA dimethylallyltransferase (325 aa).

11 to 18 provides a ligand contact to ATP; it reads GPTASGKS. 13 to 18 lines the substrate pocket; it reads TASGKS. 2 interaction with substrate tRNA regions span residues 36-39 and 160-164; these read DSMQ and QRLIR.

Belongs to the IPP transferase family. As to quaternary structure, monomer. Mg(2+) is required as a cofactor.

It catalyses the reaction adenosine(37) in tRNA + dimethylallyl diphosphate = N(6)-dimethylallyladenosine(37) in tRNA + diphosphate. Functionally, catalyzes the transfer of a dimethylallyl group onto the adenine at position 37 in tRNAs that read codons beginning with uridine, leading to the formation of N6-(dimethylallyl)adenosine (i(6)A). This Rickettsia canadensis (strain McKiel) protein is tRNA dimethylallyltransferase.